A 941-amino-acid polypeptide reads, in one-letter code: Bifunctional glutamine synthetase adenylyltransferase/adenylyl-removing enzyme (941 aa).

The segment at 1-437 is adenylyl removase; that stretch reads MPMPTVSMSP…AAEFAELLAP (437 aa). Positions 444–941 are adenylyl transferase; sequence PDALADYWRA…FPLGKDETAL (498 aa).

Belongs to the GlnE family. It depends on Mg(2+) as a cofactor.

The enzyme catalyses [glutamine synthetase]-O(4)-(5'-adenylyl)-L-tyrosine + phosphate = [glutamine synthetase]-L-tyrosine + ADP. The catalysed reaction is [glutamine synthetase]-L-tyrosine + ATP = [glutamine synthetase]-O(4)-(5'-adenylyl)-L-tyrosine + diphosphate. Functionally, involved in the regulation of glutamine synthetase GlnA, a key enzyme in the process to assimilate ammonia. When cellular nitrogen levels are high, the C-terminal adenylyl transferase (AT) inactivates GlnA by covalent transfer of an adenylyl group from ATP to specific tyrosine residue of GlnA, thus reducing its activity. Conversely, when nitrogen levels are low, the N-terminal adenylyl removase (AR) activates GlnA by removing the adenylyl group by phosphorolysis, increasing its activity. The regulatory region of GlnE binds the signal transduction protein PII (GlnB) which indicates the nitrogen status of the cell. This chain is Bifunctional glutamine synthetase adenylyltransferase/adenylyl-removing enzyme, found in Xanthomonas axonopodis pv. citri (strain 306).